Consider the following 313-residue polypeptide: Malate dehydrogenase (313 aa).

Residues 11–16 and Asp35 contribute to the NAD(+) site; that span reads GAGSIG. Substrate contacts are provided by Arg84 and Arg90. NAD(+) is bound by residues Asn97 and 120–122; that span reads VTN. Substrate is bound by residues Asn122 and Arg153. Catalysis depends on His177, which acts as the Proton acceptor.

It belongs to the LDH/MDH superfamily. MDH type 3 family.

The enzyme catalyses (S)-malate + NAD(+) = oxaloacetate + NADH + H(+). Functionally, catalyzes the reversible oxidation of malate to oxaloacetate. This Ehrlichia chaffeensis (strain ATCC CRL-10679 / Arkansas) protein is Malate dehydrogenase.